Here is a 199-residue protein sequence, read N- to C-terminus: Chaperone protein TorD (199 aa).

Belongs to the TorD/DmsD family. TorD subfamily.

It is found in the cytoplasm. Its function is as follows. Involved in the biogenesis of TorA. Acts on TorA before the insertion of the molybdenum cofactor and, as a result, probably favors a conformation of the apoenzyme that is competent for acquiring the cofactor. This is Chaperone protein TorD from Escherichia coli O6:H1 (strain CFT073 / ATCC 700928 / UPEC).